Reading from the N-terminus, the 930-residue chain is Translation initiation factor IF-2 (930 aa).

A compositionally biased stretch (low complexity) spans 50 to 67; it reads FKPAAAPKVEAKPAAPKV. 2 disordered regions span residues 50-195 and 260-346; these read FKPA…PRID and EVVP…HELP. 2 stretches are compositionally biased toward basic and acidic residues: residues 68-90 and 110-125; these read SAEK…EAKP and FKAE…AERR. Low complexity predominate over residues 129–141; that stretch reads KGNNRDQQQNGNR. Basic and acidic residues-rich tracts occupy residues 157-167 and 262-295; these read RDNRRFNDQAK and VPEK…DGPR. A compositionally biased stretch (low complexity) spans 309-318; that stretch reads NQKNSNWNNN. A compositionally biased stretch (basic and acidic residues) spans 337–346; sequence VTERKFHELP. Residues 432 to 599 enclose the tr-type G domain; it reads ERPPVVTIMG…TVLLVAEIQE (168 aa). Residues 441–448 are G1; that stretch reads GHVDHGKT. GTP is bound at residue 441 to 448; sequence GHVDHGKT. Residues 466-470 are G2; that stretch reads GITQH. The G3 stretch occupies residues 487-490; the sequence is DTPG. GTP is bound by residues 487–491 and 541–544; these read DTPGH and NKID. The G4 stretch occupies residues 541 to 544; that stretch reads NKID. The segment at 577–579 is G5; the sequence is SAK.

It belongs to the TRAFAC class translation factor GTPase superfamily. Classic translation factor GTPase family. IF-2 subfamily.

The protein localises to the cytoplasm. In terms of biological role, one of the essential components for the initiation of protein synthesis. Protects formylmethionyl-tRNA from spontaneous hydrolysis and promotes its binding to the 30S ribosomal subunits. Also involved in the hydrolysis of GTP during the formation of the 70S ribosomal complex. In Streptococcus pneumoniae (strain Hungary19A-6), this protein is Translation initiation factor IF-2.